Consider the following 36-residue polypeptide: Pancreatic polypeptide (36 aa).

A Tyrosine amide modification is found at tyrosine 36.

This sequence belongs to the NPY family.

Its subcellular location is the secreted. In terms of biological role, hormone secreted by pancreatic cells that acts as a regulator of pancreatic and gastrointestinal functions probably by signaling through the G protein-coupled receptor NPY4R2. The chain is Pancreatic polypeptide (PPY) from Equus przewalskii (Przewalski's horse).